We begin with the raw amino-acid sequence, 423 residues long: Tubulin beta-2 chain (423 aa).

GTP is bound by residues Glu44, Ser113, Gly117, Thr118, Gly119, Asn179, and Asn201. Residue Glu44 coordinates Mg(2+). The interval 394-423 (VSEYQQYQDATAEEEGEYDEDEDDEGGDYA) is disordered. Acidic residues predominate over residues 404–423 (TAEEEGEYDEDEDDEGGDYA).

The protein belongs to the tubulin family. Dimer of alpha and beta chains. A typical microtubule is a hollow water-filled tube with an outer diameter of 25 nm and an inner diameter of 15 nM. Alpha-beta heterodimers associate head-to-tail to form protofilaments running lengthwise along the microtubule wall with the beta-tubulin subunit facing the microtubule plus end conferring a structural polarity. Microtubules usually have 13 protofilaments but different protofilament numbers can be found in some organisms and specialized cells. Mg(2+) is required as a cofactor.

The protein resides in the cytoplasm. Its subcellular location is the cytoskeleton. Tubulin is the major constituent of microtubules, a cylinder consisting of laterally associated linear protofilaments composed of alpha- and beta-tubulin heterodimers. Microtubules grow by the addition of GTP-tubulin dimers to the microtubule end, where a stabilizing cap forms. Below the cap, tubulin dimers are in GDP-bound state, owing to GTPase activity of alpha-tubulin. The chain is Tubulin beta-2 chain (TUBB2) from Oomycete-like sp. (strain MacKay2000).